The following is a 148-amino-acid chain: Large ribosomal subunit protein bL9 (148 aa).

Belongs to the bacterial ribosomal protein bL9 family.

In terms of biological role, binds to the 23S rRNA. The chain is Large ribosomal subunit protein bL9 from Campylobacter concisus (strain 13826).